Here is a 174-residue protein sequence, read N- to C-terminus: ATP synthase subunit delta (174 aa).

Belongs to the ATPase delta chain family. F-type ATPases have 2 components, F(1) - the catalytic core - and F(0) - the membrane proton channel. F(1) has five subunits: alpha(3), beta(3), gamma(1), delta(1), epsilon(1). F(0) has three main subunits: a(1), b(2) and c(10-14). The alpha and beta chains form an alternating ring which encloses part of the gamma chain. F(1) is attached to F(0) by a central stalk formed by the gamma and epsilon chains, while a peripheral stalk is formed by the delta and b chains.

The protein localises to the cell inner membrane. F(1)F(0) ATP synthase produces ATP from ADP in the presence of a proton or sodium gradient. F-type ATPases consist of two structural domains, F(1) containing the extramembraneous catalytic core and F(0) containing the membrane proton channel, linked together by a central stalk and a peripheral stalk. During catalysis, ATP synthesis in the catalytic domain of F(1) is coupled via a rotary mechanism of the central stalk subunits to proton translocation. In terms of biological role, this protein is part of the stalk that links CF(0) to CF(1). It either transmits conformational changes from CF(0) to CF(1) or is implicated in proton conduction. The chain is ATP synthase subunit delta from Fusobacterium nucleatum subsp. nucleatum (strain ATCC 25586 / DSM 15643 / BCRC 10681 / CIP 101130 / JCM 8532 / KCTC 2640 / LMG 13131 / VPI 4355).